Consider the following 545-residue polypeptide: 2-succinyl-5-enolpyruvyl-6-hydroxy-3-cyclohexene-1-carboxylate synthase (545 aa).

The span at 170-185 (QVSGLQRSAPAPSSDS) shows a compositional bias: polar residues. The disordered stretch occupies residues 170-193 (QVSGLQRSAPAPSSDSPLGAAPQL).

Belongs to the TPP enzyme family. MenD subfamily. Homodimer. It depends on Mg(2+) as a cofactor. Requires Mn(2+) as cofactor. Thiamine diphosphate is required as a cofactor.

It carries out the reaction isochorismate + 2-oxoglutarate + H(+) = 5-enolpyruvoyl-6-hydroxy-2-succinyl-cyclohex-3-ene-1-carboxylate + CO2. It participates in quinol/quinone metabolism; 1,4-dihydroxy-2-naphthoate biosynthesis; 1,4-dihydroxy-2-naphthoate from chorismate: step 2/7. Its pathway is cofactor biosynthesis; phylloquinone biosynthesis. Its function is as follows. Catalyzes the thiamine diphosphate-dependent decarboxylation of 2-oxoglutarate and the subsequent addition of the resulting succinic semialdehyde-thiamine pyrophosphate anion to isochorismate to yield 2-succinyl-5-enolpyruvyl-6-hydroxy-3-cyclohexene-1-carboxylate (SEPHCHC). The protein is 2-succinyl-5-enolpyruvyl-6-hydroxy-3-cyclohexene-1-carboxylate synthase of Parasynechococcus marenigrum (strain WH8102).